Consider the following 569-residue polypeptide: Urease subunit alpha (569 aa).

A Urease domain is found at 132 to 569 (GGIDSHIHFI…LPLAQRYFLF (438 aa)). Positions 137, 139, and 220 each coordinate Ni(2+). An N6-carboxylysine modification is found at Lys220. His222 is a binding site for substrate. Positions 249 and 275 each coordinate Ni(2+). The Proton donor role is filled by His323. Residue Asp363 participates in Ni(2+) binding.

Belongs to the metallo-dependent hydrolases superfamily. Urease alpha subunit family. In terms of assembly, heterotrimer of UreA (gamma), UreB (beta) and UreC (alpha) subunits. Three heterotrimers associate to form the active enzyme. Requires Ni cation as cofactor. In terms of processing, carboxylation allows a single lysine to coordinate two nickel ions.

The protein resides in the cytoplasm. It carries out the reaction urea + 2 H2O + H(+) = hydrogencarbonate + 2 NH4(+). It functions in the pathway nitrogen metabolism; urea degradation; CO(2) and NH(3) from urea (urease route): step 1/1. This Dechloromonas aromatica (strain RCB) protein is Urease subunit alpha.